Consider the following 529-residue polypeptide: Potassium voltage-gated channel subfamily A member 6 (529 aa).

The interval 1–33 (MRSEKSLTLAAPGEVRGPEGEQQDAGDFPEAGG) is disordered. Residues 1-171 (MRSEKSLTLA…LLFEYPESSG (171 aa)) lie on the Cytoplasmic side of the membrane. Residue Ser-3 is modified to Phosphoserine. Residues 172 to 193 (PARGIAIVSVLVILISIVIFCL) form a helical membrane-spanning segment. The Extracellular segment spans residues 194 to 262 (ETLPQFRVDG…TLGGSFFTDP (69 aa)). Residues 210–220 (GVSRVSPVSRG) are compositionally biased toward low complexity. The disordered stretch occupies residues 210–233 (GVSRVSPVSRGSQEEEEDEDDSYT). Residues 263–284 (FFLVETLCIVWFTFELLVRFSA) form a helical membrane-spanning segment. Cys-285 carries the S-palmitoyl cysteine lipid modification. Topologically, residues 285–295 (CPSKPAFFRNI) are cytoplasmic. Residues 296 to 316 (MNIIDLVAIFPYFITLGTELV) traverse the membrane as a helical segment. Residues 317–337 (QQQEQQPASGGGGQNGQQAMS) are Extracellular-facing. Residues 338 to 358 (LAILRVIRLVRVFRIFKLSRH) form a helical; Voltage-sensor membrane-spanning segment. At 359 to 373 (SKGLQILGKTLQASM) the chain is on the cytoplasmic side. The segment at 360 to 373 (KGLQILGKTLQASM) is S4-S5 linker. The chain crosses the membrane as a helical span at residues 374 to 395 (RELGLLIFFLFIGVILFSSAVY). The Extracellular segment spans residues 396–409 (FAEADDDDSLFPSI). Positions 410–421 (PDAFWWAVVTMT) form an intramembrane region, helical. The Selectivity filter signature appears at 422-427 (TVGYGD). The stretch at 422–429 (TVGYGDMY) is an intramembrane region. Residues 430 to 436 (PMTVGGK) lie on the Extracellular side of the membrane. Residues 437 to 465 (IVGSLCAIAGVLTIALPVPVIVSNFNYFY) traverse the membrane as a helical segment. Residues 466 to 529 (HRETEQEEQG…YAEKRMLTEV (64 aa)) are Cytoplasmic-facing. The tract at residues 488 to 513 (DLRATDNGLGKPDFPEANRERRPSYL) is disordered. Residues 500 to 510 (DFPEANRERRP) show a composition bias toward basic and acidic residues. A Phosphoserine; by PKA modification is found at Ser-511. The PDZ-binding signature appears at 527–529 (TEV).

This sequence belongs to the potassium channel family. A (Shaker) (TC 1.A.1.2) subfamily. Kv1.6/KCNA6 sub-subfamily. As to quaternary structure, homotetramer and heterotetramer of potassium channel proteins. Interacts with KCNAB1 and KCNAB2.

It is found in the cell membrane. The catalysed reaction is K(+)(in) = K(+)(out). Functionally, voltage-gated potassium channel that mediates transmembrane potassium transport in excitable membranes. Forms tetrameric potassium-selective channels through which potassium ions pass in accordance with their electrochemical gradient. The channel alternates between opened and closed conformations in response to the voltage difference across the membrane. Can form functional homotetrameric channels and heterotetrameric channels that contain variable proportions of KCNA1, KCNA2, KCNA4, KCNA6, and possibly other family members as well; channel properties depend on the type of alpha subunits that are part of the channel. Channel properties are modulated by cytoplasmic beta subunits that regulate the subcellular location of the alpha subunits and promote rapid inactivation. Homotetrameric channels display rapid activation and slow inactivation. The protein is Potassium voltage-gated channel subfamily A member 6 (KCNA6) of Homo sapiens (Human).